The primary structure comprises 335 residues: MFFDREKELSKLLKIIESEPSLITFIYGPINSGKTALIQEFIRKMPDHYVAFYINLRATPITKYEDFIDILFSIEFENPIKNLKEALSLVISAGKEILGIPIPNDFLKQILSENKPKNAFLYITKLLTEVKRRGKRPILILDELQVIGDLRINGPLIYEIFNFFIHLTKEAHLSHVFTITSDSLFMERIYSEAMLQGRADYFLVDDFDEKTALNFLKSQGLTEEEANLALEYFGGKPPYLIEAIKHREELEDYCKKALAMRTRQVYSFAYGKRRIIKLLTEFKNKEEVPFTGKVTRTLEEAVKANILFVDPLNGIIKPQGRLELLAIREALRMLT.

Gly-28–Thr-35 contributes to the ATP binding site.

It belongs to the archaeal ATPase family.

This is an uncharacterized protein from Pyrococcus abyssi (strain GE5 / Orsay).